The primary structure comprises 542 residues: Chaperonin GroEL 3 (542 aa).

ATP contacts are provided by residues 29-32 (TLGP), 86-90 (DGTTT), Gly-413, 477-479 (NAA), and Asp-493.

It belongs to the chaperonin (HSP60) family. Forms a cylinder of 14 subunits composed of two heptameric rings stacked back-to-back. Interacts with the co-chaperonin GroES.

The protein resides in the cytoplasm. It catalyses the reaction ATP + H2O + a folded polypeptide = ADP + phosphate + an unfolded polypeptide.. Functionally, together with its co-chaperonin GroES, plays an essential role in assisting protein folding. The GroEL-GroES system forms a nano-cage that allows encapsulation of the non-native substrate proteins and provides a physical environment optimized to promote and accelerate protein folding. This chain is Chaperonin GroEL 3, found in Frankia alni (strain DSM 45986 / CECT 9034 / ACN14a).